The primary structure comprises 160 residues: uncharacterized protein (160 aa).

Positions 1–23 (MSIPHSVFSALLVFVALATTTLA) are cleaved as a signal peptide. Over 24–132 (STEACLPTNK…DPNTAYWSSD (109 aa)) the chain is Cytoplasmic. A helical transmembrane segment spans residues 133–155 (LFGFYTTPTNVTVEMTGYLIWSM). Residues 156–160 (GNRRR) are Extracellular-facing.

To yeast protein FLO1.

Its subcellular location is the cell membrane. This is an uncharacterized protein from Saccharomyces cerevisiae (strain ATCC 204508 / S288c) (Baker's yeast).